Consider the following 708-residue polypeptide: MSEHGIKWACEYCTYENWPSAIKCTMCRAQRPSGTIITEDPFKSGSSDVGRDWDPSSTEGGSSPLICPDSSARPRVKSSYSMENANKWSCHMCTYLNWPRAIRCTQCLSQRRTRSPTESPQSSGSGSRPVAFSVDPCEEYNDRNKLNTRTQHWTCSVCTYENWAKAKKCVVCDHPRPNNIEAIELAETEEASSIINEQDRARWRGGCSSGNSQRRSPPTTKRDSEVKMDFQRIELAGAVGTKEELEVDFKKLKQIKNRMKKTDWLFLNACVGVVEGDLAAIEAYKSSGGDIARQLTADEVRLLNRPSAFDVGYTLVHLAIRFQRQDMLAILLTEVSQQAAKCIPAMVCPELTEQIRREIAASLHQRKGDFACYFLTDLVTFTLPADIEDLPPTVQEKLFDEVLDRDVQKELEEESPIINWSLELATRLDSRLYALWNRTAGDCLLDSVLQATWGIYDKDSVLRKALHDSLHDCSHWFYTRWKDWESWYSQSFGLHFSLREEQWQEDWAFILSLASQPGASLEQTHIFVLAHILRRPIIVYGVKYYKSFRGETLGYTRFQGVYLPLLWEQSFCWKSPIALGYTRGHFSALVAMENDGYGNRGAGANLNTDDDVTITFLPLVDSERKLLHVHFLSAQELGNEEQQEKLLREWLDCCVTEGGVLVAMQKSSRRRNHPLVTQMVEKWLDRYRQIRPCTSLSDGEEDEDDEDE.

The segment at 3-33 (EHGIKWACEYCTYENWPSAIKCTMCRAQRPS) adopts a RanBP2-type 1 zinc-finger fold. Residues Cys-10, Cys-13, Cys-24, and Cys-27 each contribute to the Zn(2+) site. A disordered region spans residues 38 to 73 (TEDPFKSGSSDVGRDWDPSSTEGGSSPLICPDSSAR). RanBP2-type zinc fingers lie at residues 84–113 (NANK…QRRT) and 149–178 (RTQH…PRPN). Positions 90, 93, 104, 107, 155, 158, 169, and 172 each coordinate Zn(2+). The disordered stretch occupies residues 202 to 224 (RWRGGCSSGNSQRRSPPTTKRDS). The span at 209–219 (SGNSQRRSPPT) shows a compositional bias: polar residues. ANK repeat units follow at residues 260 to 290 (KKTD…SGGD) and 313 to 340 (YTLV…QQAA). Residues 432–592 (LYALWNRTAG…RGHFSALVAM (161 aa)) form the OTU domain. Cys-443 (nucleophile) is an active-site residue. The active-site Proton acceptor is His-585.

It belongs to the peptidase C64 family. Interacts with TRAF6. Interacts with APC.

The protein resides in the cytoplasm. Its subcellular location is the nucleus. The catalysed reaction is Thiol-dependent hydrolysis of ester, thioester, amide, peptide and isopeptide bonds formed by the C-terminal Gly of ubiquitin (a 76-residue protein attached to proteins as an intracellular targeting signal).. Its function is as follows. Ubiquitin thioesterase, which specifically hydrolyzes 'Lys-29'-linked and 'Lys-33'-linked diubiquitin. Also cleaves 'Lys-63'-linked chains, but with 40-fold less efficiency compared to 'Lys-29'-linked ones. Positive regulator of the Wnt signaling pathway that deubiquitinates APC protein, a negative regulator of Wnt-mediated transcription. Acts as a regulator of autophagy by mediating deubiquitination of PIK3C3/VPS34, thereby promoting autophagosome maturation. Plays a role in the regulation of cell morphology and cytoskeletal organization. Required in the stress fiber dynamics and cell migration. This Mus musculus (Mouse) protein is Ubiquitin thioesterase Zranb1.